Consider the following 926-residue polypeptide: Chitin synthase-like protein 2 (926 aa).

A disordered region spans residues 1-56 (MSFQNPSYINAKHRSFLQPKDTQDSQDLRNWVSHSSVDEETAYSSSTLSSSSSKSF). Low complexity predominate over residues 44 to 55 (SSSTLSSSSSKS). 7 consecutive transmembrane segments (helical) span residues 564-584 (INSSFSLAVYVIVDFFSLWTT), 599-619 (LVFAIEKLVNFFSMANFFLAF), 641-661 (LFLVFEYILICLIFSQFMLAM), 671-691 (LLFISTALFSIIMIYFVFCVF), 721-741 (LLILACYAFVSLICMDPFFIF), 853-873 (VLVWAVSNLILAIVLIQVFDG), and 885-905 (IFWSIVAFTAWKTMGAVTFIA).

The protein belongs to the chitin synthase family.

It is found in the membrane. Functionally, plays a role in septum formation. Has no chitin synthase activity. This chain is Chitin synthase-like protein 2 (chs2), found in Schizosaccharomyces pombe (strain 972 / ATCC 24843) (Fission yeast).